The chain runs to 277 residues: Bifunctional protein FolD 1 (277 aa).

NADP(+) is bound by residues 162–164 (GDS) and S187.

The protein belongs to the tetrahydrofolate dehydrogenase/cyclohydrolase family. In terms of assembly, homodimer.

The catalysed reaction is (6R)-5,10-methylene-5,6,7,8-tetrahydrofolate + NADP(+) = (6R)-5,10-methenyltetrahydrofolate + NADPH. It catalyses the reaction (6R)-5,10-methenyltetrahydrofolate + H2O = (6R)-10-formyltetrahydrofolate + H(+). Its pathway is one-carbon metabolism; tetrahydrofolate interconversion. Functionally, catalyzes the oxidation of 5,10-methylenetetrahydrofolate to 5,10-methenyltetrahydrofolate and then the hydrolysis of 5,10-methenyltetrahydrofolate to 10-formyltetrahydrofolate. In Syntrophomonas wolfei subsp. wolfei (strain DSM 2245B / Goettingen), this protein is Bifunctional protein FolD 1.